A 945-amino-acid polypeptide reads, in one-letter code: MSNKKADSKPQAKYPVNLLDTPFPMRGDLPKREPQWVKEWEERGVYEKIRAASKGRPKFILHDGPPYANGDIHLGHAVNKILKDIVVKSRNMAGFDAPYVPGWDCHGMPIEIQIEKQFGKSLPAAEVMSKARAYATEQIEKQKAGFKRLGVLGDWADPYKTMNFVNEAEEIRALGKIIEKGYVYRGLKPVNWCFDCGSALAEAEVEYKDRTDPTIDVMFPFAEPEKTAQAFGLPALPRAEGGIVIWTTTPWTIPANQALNLHPEIVYALVDTERGLLIVAEERVAACMEEFKLSGRVVATAPGVKLVNLRFHHPLASAHPGYKRTAPVYLGDYVTTDTGTGVVHSSPAYGVEDFISCKTHGMTDSDIINPVMGDGRYIESLPLFGGLSIWDANPKVVDALRDAGTLLRSEKYTHSYMHCWRHKTPIIYRATSQWFAGMDVTPREGGKTLRETALEGVEATAFYPSWGKQRLFSMIANRPDWTLSRQRQWGVPMAFFVHKETGELHPRTLELLEEVAKRVEKSGIEAWQTLDPRELIGDDANLYEKNRDTLDVWFDSGTTHWHVLRGSHKDQLQFPADLYLEGSDQHRGWFHSSLLTASMLDGRAPYKGLLTHGFTVDGEGRKMSKSLGNGVDPHEVANRLGAEIIRLWIASTDYSGELAISEEILKRVTEGYRRIRNTLRFLLANLSDFDYAQHAVPVDEWLEIDRYAVAFSAQLQTELLAYYEKYEFHPVVAKLQTYCSEDLGGFYLDVLKDRLYTSAPDSRARRSAQTALYHLTQGLLRVLAPFLSFTAEEAWKVFQPASDTIFTETYYAYPDVADADALIDKWSLLRDVRGTVTKALEEARTANRIGSSLQAEVTVHASGARYDALASLGDDLKFVLITSAATVVKVDDEAQEGVDVAASKYQKCERCWHYREDVGAHADHPTLCGRCFSNLFENGEIRSAA.

Over residues 1–10 (MSNKKADSKP) the composition is skewed to basic and acidic residues. The interval 1–21 (MSNKKADSKPQAKYPVNLLDT) is disordered. The short motif at 66–76 (PYANGDIHLGH) is the 'HIGH' region element. Glutamate 581 provides a ligand contact to L-isoleucyl-5'-AMP. Residues 622 to 626 (KMSKS) carry the 'KMSKS' region motif. Residue lysine 625 participates in ATP binding. Zn(2+)-binding residues include cysteine 908, cysteine 911, cysteine 928, and cysteine 931.

The protein belongs to the class-I aminoacyl-tRNA synthetase family. IleS type 1 subfamily. As to quaternary structure, monomer. It depends on Zn(2+) as a cofactor.

It localises to the cytoplasm. It carries out the reaction tRNA(Ile) + L-isoleucine + ATP = L-isoleucyl-tRNA(Ile) + AMP + diphosphate. Its function is as follows. Catalyzes the attachment of isoleucine to tRNA(Ile). As IleRS can inadvertently accommodate and process structurally similar amino acids such as valine, to avoid such errors it has two additional distinct tRNA(Ile)-dependent editing activities. One activity is designated as 'pretransfer' editing and involves the hydrolysis of activated Val-AMP. The other activity is designated 'posttransfer' editing and involves deacylation of mischarged Val-tRNA(Ile). The protein is Isoleucine--tRNA ligase of Burkholderia multivorans (strain ATCC 17616 / 249).